The primary structure comprises 515 residues: ATP synthase subunit alpha (515 aa).

An ATP-binding site is contributed by 171–178 (GDRQTGKT).

The protein belongs to the ATPase alpha/beta chains family. As to quaternary structure, F-type ATPases have 2 components, CF(1) - the catalytic core - and CF(0) - the membrane proton channel. CF(1) has five subunits: alpha(3), beta(3), gamma(1), delta(1), epsilon(1). CF(0) has three main subunits: a(1), b(2) and c(9-12). The alpha and beta chains form an alternating ring which encloses part of the gamma chain. CF(1) is attached to CF(0) by a central stalk formed by the gamma and epsilon chains, while a peripheral stalk is formed by the delta and b chains.

The protein resides in the cell inner membrane. It carries out the reaction ATP + H2O + 4 H(+)(in) = ADP + phosphate + 5 H(+)(out). Produces ATP from ADP in the presence of a proton gradient across the membrane. The alpha chain is a regulatory subunit. This chain is ATP synthase subunit alpha, found in Stenotrophomonas maltophilia (strain R551-3).